The primary structure comprises 429 residues: Phosphoribosylamine--glycine ligase (429 aa).

The ATP-grasp domain maps to Lys-109 to Glu-316. Leu-135–Ser-196 lines the ATP pocket. The segment at Ser-212–Ala-236 is disordered. Residues Gln-213–Thr-223 show a composition bias toward basic and acidic residues. Mg(2+) contacts are provided by Glu-286 and Asn-288.

It belongs to the GARS family. As to quaternary structure, monomer. Requires Mg(2+) as cofactor. Mn(2+) is required as a cofactor.

The catalysed reaction is 5-phospho-beta-D-ribosylamine + glycine + ATP = N(1)-(5-phospho-beta-D-ribosyl)glycinamide + ADP + phosphate + H(+). It participates in purine metabolism; IMP biosynthesis via de novo pathway; N(1)-(5-phospho-D-ribosyl)glycinamide from 5-phospho-alpha-D-ribose 1-diphosphate: step 2/2. This chain is Phosphoribosylamine--glycine ligase, found in Escherichia coli O6:H1 (strain CFT073 / ATCC 700928 / UPEC).